We begin with the raw amino-acid sequence, 222 residues long: Pectate lyase A (222 aa).

The first 26 residues, 1–26, serve as a signal peptide directing secretion; sequence MKKMLTLLLSAGLVASIFGVMPAAAA.

The protein belongs to the polysaccharide lyase 3 family. Requires Ca(2+) as cofactor.

It localises to the secreted. The catalysed reaction is Eliminative cleavage of (1-&gt;4)-alpha-D-galacturonan to give oligosaccharides with 4-deoxy-alpha-D-galact-4-enuronosyl groups at their non-reducing ends.. It carries out the reaction Eliminative cleavage of (1-&gt;4)-alpha-D-galacturonan methyl ester to give oligosaccharides with 4-deoxy-6-O-methyl-alpha-D-galact-4-enuronosyl groups at their non-reducing ends.. It functions in the pathway glycan metabolism; pectin degradation. In terms of biological role, catalyzes the depolymerization of both polygalacturonate and pectins with low (20-34%) and high (90%) levels of methyl esterification, with an endo mode of action. In contrast to the majority of pectate lyases, displays high activity on highly methylated pectins. Does not show xylanase and cellulase activity. The protein is Pectate lyase A of Paenibacillus amylolyticus.